Reading from the N-terminus, the 208-residue chain is Cysteine-rich protein 2 (208 aa).

Residues 5–57 (CPKCDKTVYFAEKVSSLGKDWHKFCLKCERCSKTLTPGGHAEHDGKPFCHKPC) form the LIM zinc-binding 1 domain. K23 is modified (N6-acetyllysine). Residues 98–119 (AEERKASGPPKGPSRASSVTTF) are disordered. Phosphoserine is present on S104. An LIM zinc-binding 2 domain is found at 126 to 178 (CPRCSKKVYFAEKVTSLGKDWHRPCLRCERCGKTLTPGGHAEHDGQPYCHKPC). Residues K138 and K144 each carry the N6-acetyllysine modification.

Interacts with TGFB1I1. Widespread tissue expression; highest levels in the heart.

This Homo sapiens (Human) protein is Cysteine-rich protein 2 (CRIP2).